Consider the following 508-residue polypeptide: 2,3-bisphosphoglycerate-independent phosphoglycerate mutase (508 aa).

2 residues coordinate Mn(2+): aspartate 14 and serine 64. Catalysis depends on serine 64, which acts as the Phosphoserine intermediate. Residues histidine 125, 155–156, arginine 187, arginine 193, 259–262, and lysine 332 each bind substrate; these read RD and RADR. The Mn(2+) site is built by aspartate 399, histidine 403, aspartate 440, histidine 441, and histidine 459.

The protein belongs to the BPG-independent phosphoglycerate mutase family. In terms of assembly, monomer. It depends on Mn(2+) as a cofactor.

The enzyme catalyses (2R)-2-phosphoglycerate = (2R)-3-phosphoglycerate. It participates in carbohydrate degradation; glycolysis; pyruvate from D-glyceraldehyde 3-phosphate: step 3/5. In terms of biological role, catalyzes the interconversion of 2-phosphoglycerate and 3-phosphoglycerate. This chain is 2,3-bisphosphoglycerate-independent phosphoglycerate mutase, found in Pseudomonas fluorescens (strain Pf0-1).